Consider the following 387-residue polypeptide: Exodeoxyribonuclease 7 large subunit (387 aa).

Belongs to the XseA family. Heterooligomer composed of large and small subunits.

The protein localises to the cytoplasm. It catalyses the reaction Exonucleolytic cleavage in either 5'- to 3'- or 3'- to 5'-direction to yield nucleoside 5'-phosphates.. Functionally, bidirectionally degrades single-stranded DNA into large acid-insoluble oligonucleotides, which are then degraded further into small acid-soluble oligonucleotides. The polypeptide is Exodeoxyribonuclease 7 large subunit (Synechococcus sp. (strain CC9605)).